A 580-amino-acid polypeptide reads, in one-letter code: Serine/threonine-protein kinase srk1 (580 aa).

Over residues V51–K61 the composition is skewed to polar residues. The segment at V51 to E91 is disordered. In terms of domain architecture, Protein kinase spans Y124–I421. Residues M130–V138 and K153 each bind ATP. D257 acts as the Proton acceptor in catalysis. Positions N530–V580 are disordered. Residues P537 to R554 are compositionally biased toward low complexity.

This sequence belongs to the protein kinase superfamily. CAMK Ser/Thr protein kinase family. CaMK subfamily. Mg(2+) serves as cofactor. Post-translationally, phosphorylated by sty1.

The protein localises to the cytoplasm. It is found in the nucleus. Its subcellular location is the nucleolus. It localises to the spore core. The enzyme catalyses L-seryl-[protein] + ATP = O-phospho-L-seryl-[protein] + ADP + H(+). It catalyses the reaction L-threonyl-[protein] + ATP = O-phospho-L-threonyl-[protein] + ADP + H(+). Its function is as follows. Delays the mitotic G2/M transition by promoting nuclear exclusion of cdc25. During osmotic stress, inhibits the G2/M transition in a sty1 stress-activated MAPK pathway-dependent manner. This is Serine/threonine-protein kinase srk1 from Schizosaccharomyces pombe (strain 972 / ATCC 24843) (Fission yeast).